The following is a 2172-amino-acid chain: Non-reducing polyketide synthase dpfgA (2172 aa).

Residues 74 to 181 form an N-terminal acylcarrier protein transacylase domain (SAT) region; sequence EWIKCGNSSL…LALCVGALVD (108 aa). In terms of domain architecture, Ketosynthase family 3 (KS3) spans 389-783; it reads DDSIAIIGVS…GTNAAMLVCQ (395 aa). Catalysis depends on for beta-ketoacyl synthase activity residues C529, H665, and H706. The segment at 895 to 1197 is malonyl-CoA:ACP transacylase (MAT) domain; that stretch reads VFAGQTGRQA…SFHSILLQGQ (303 aa). S981 functions as the For acyl/malonyl transferase activity in the catalytic mechanism. Residues 1270 to 1403 form an N-terminal hotdog fold region; the sequence is PELVSLAGPT…GTINWQGQGC (134 aa). The region spanning 1270–1581 is the PKS/mFAS DH domain; the sequence is PELVSLAGPT…LKRIPIRSLQ (312 aa). Residues 1277-1575 form a product template (PT) domain region; the sequence is GPTDGETVEF…EIIGASLKRI (299 aa). The C-terminal hotdog fold stretch occupies residues 1428–1581; the sequence is SASTVQGLFV…LKRIPIRSLQ (154 aa). Disordered stretches follow at residues 1608–1631 and 1650–1672; these read DSDSDLPDSEANSPRVGSDLHADF and YPMDSSSFSSAQPPSSASSVLSD. The span at 1650 to 1668 shows a compositional bias: low complexity; sequence YPMDSSSFSSAQPPSSASS. A Carrier domain is found at 1671–1747; sequence SDHDQESTAL…DLYRMVLNHD (77 aa). S1707 bears the O-(pantetheine 4'-phosphoryl)serine mark. The interval 1751-1773 is disordered; that stretch reads DRGSTVLSDKAPKSKSDSSLHGQ. The tract at residues 1975-2155 is methyltransferase (CMeT) domain; that stretch reads EFLHRVLSRL…DAGFIHVDWT (181 aa).

Its pathway is secondary metabolite biosynthesis; terpenoid biosynthesis. In terms of biological role, non-reducing polyketide synthase; part of the gene cluster that mediates the biosynthesis of diterpenoid pyrones. The first step of the pathway is the synthesis of the alpha-pyrone moiety by the polyketide synthase dpfgA via condensation of one acetyl-CoA starter unit with 3 malonyl-CoA units and 2 methylations. The alpha-pyrone is then combined with geranylgeranyl pyrophosphate (GGPP) formed by the GGPP synthase dpfgD through the action of the prenyltransferase dpfgC to yield a linear alpha-pyrone diterpenoid. Subsequent steps in the diterpenoid pyrone biosynthetic pathway involve the decalin core formation, which is initiated by the epoxidation of the C10-C11 olefin by the FAD-dependent oxidoreductase dpfgE, and is followed by a cyclization cascade catalyzed by the terpene cyclase dpfgB. The short chain dehydrogenase/reductase dpfgG then oxidizes the 8S hydroxy group to a ketone and the short chain dehydrogenase/reductase dpfgH reduces the ketone to the 8R hydroxy group to yield higginsianin B. Higginsianin B is further methylated by the methyltransferase dpfgI to produce the intermediate named FDDP B. The cytochrome P450 monooxygenase dfgpJ then catalyzes a three-step oxidation at C-27 to generate a carboxylic acid as well as C-26 hydroxylation. Finally, methyltransferase dpfgK methylates the carboxylic acid generated by dpfgJ, yielding the final diterpenoid pyrones from the pathway which were named FDDP D and FDDP E. This chain is Non-reducing polyketide synthase dpfgA, found in Gibberella zeae (strain ATCC MYA-4620 / CBS 123657 / FGSC 9075 / NRRL 31084 / PH-1) (Wheat head blight fungus).